A 311-amino-acid chain; its full sequence is Chalcone synthase 4 (311 aa).

The active site involves C164.

The protein belongs to the thiolase-like superfamily. Chalcone/stilbene synthases family.

It catalyses the reaction (E)-4-coumaroyl-CoA + 3 malonyl-CoA + 3 H(+) = 2',4,4',6'-tetrahydroxychalcone + 3 CO2 + 4 CoA. It functions in the pathway secondary metabolite biosynthesis; flavonoid biosynthesis. In terms of biological role, the primary product of this enzyme is 4,2',4',6'-tetrahydroxychalcone (also termed naringenin-chalcone or chalcone) which can under specific conditions spontaneously isomerize into naringenin. The polypeptide is Chalcone synthase 4 (CHS4) (Trifolium subterraneum (Subterranean clover)).